The following is a 376-amino-acid chain: Putative E3 ubiquitin-protein ligase XBAT34 (376 aa).

2 ANK repeats span residues 41–71 and 77–106; these read LGRT…NVNA and NGGT…NPLV. An RING-type zinc finger spans residues 325 to 364; it reads CVICVDAPSEAVCVPCGHVAGCISCLKEIENKKMGCPVCR.

It carries out the reaction S-ubiquitinyl-[E2 ubiquitin-conjugating enzyme]-L-cysteine + [acceptor protein]-L-lysine = [E2 ubiquitin-conjugating enzyme]-L-cysteine + N(6)-ubiquitinyl-[acceptor protein]-L-lysine.. It participates in protein modification; protein ubiquitination. Its function is as follows. No E3 ubiquitin-protein ligase activity observed when associated with the E2 enzyme UBC8 in vitro. This Arabidopsis thaliana (Mouse-ear cress) protein is Putative E3 ubiquitin-protein ligase XBAT34 (XBAT34).